Reading from the N-terminus, the 486-residue chain is G2/mitotic-specific cyclin-4 (486 aa).

Disordered stretches follow at residues 1–80 (MRSY…SSNK) and 105–126 (VLLN…DKEN). Polar residues predominate over residues 25-41 (ANLSSNHTTAGQPSTSS). Residues 108-123 (NDDDDETDDEFDDEED) show a composition bias toward acidic residues. The stretch at 122-184 (EDKENRYHDL…QSHTQDMRSI (63 aa)) forms a coiled coil. One can recognise a Cyclin N-terminal domain in the interval 234 to 359 (EIFNYLHELE…FMIDVLEFDL (126 aa)).

Belongs to the cyclin family. Cyclin AB subfamily. As to quaternary structure, interacts with IQG1.

Its function is as follows. 2/mitotic-specific cyclin essential for the control of the cell cycle at the G2/M (mitosis) transition. G2/M cyclins accumulate steadily during G2 and are abruptly destroyed at mitosis. Degradation is necessary for the cell to exit from mitosis. Plays a role in morphogenesis by negatively regulating polarized growth. Through binding to CDC28 regulates cytokinesis, partly by phosphorylation of the actomyosin ring component IQG1. In Candida albicans (strain SC5314 / ATCC MYA-2876) (Yeast), this protein is G2/mitotic-specific cyclin-4 (CLB4).